We begin with the raw amino-acid sequence, 335 residues long: Methionine import ATP-binding protein MetN 1 (335 aa).

Positions 2–242 constitute an ABC transporter domain; it reads IEFQQVHKTY…PQHPTTKRFV (241 aa). Residue 38–45 coordinates ATP; the sequence is GHSGAGKS.

Belongs to the ABC transporter superfamily. Methionine importer (TC 3.A.1.24) family. In terms of assembly, the complex is composed of two ATP-binding proteins (MetN), two transmembrane proteins (MetI) and a solute-binding protein (MetQ).

It is found in the cell inner membrane. It carries out the reaction L-methionine(out) + ATP + H2O = L-methionine(in) + ADP + phosphate + H(+). It catalyses the reaction D-methionine(out) + ATP + H2O = D-methionine(in) + ADP + phosphate + H(+). Functionally, part of the ABC transporter complex MetNIQ involved in methionine import. Responsible for energy coupling to the transport system. The chain is Methionine import ATP-binding protein MetN 1 from Pseudomonas putida (strain ATCC 47054 / DSM 6125 / CFBP 8728 / NCIMB 11950 / KT2440).